The sequence spans 469 residues: Lipase A (469 aa).

An N-terminal signal peptide occupies residues 1–22 (MMFLTQLVSALFLFFLGPISYG). Residues 40–51 (PSEDPFYQPPPG) are compositionally biased toward pro residues. Residues 40–59 (PSEDPFYQPPPGYEETEPGT) are disordered. The N-linked (GlcNAc...) asparagine glycan is linked to Asn111. A disulfide bridge connects residues Cys129 and Cys304. Residues Ser217, Asp361, and His393 each act as charge relay system in the active site. Cys377 and Cys421 are disulfide-bonded.

This sequence belongs to the AB hydrolase superfamily. Lipase family. Class Lip subfamily. Monomer.

The protein localises to the secreted. The enzyme catalyses a triacylglycerol + H2O = a diacylglycerol + a fatty acid + H(+). In terms of biological role, hydrolyzes triglycerides, with a preference for substrates with short-chain lengths (C4 to C8). This Arthroderma benhamiae (strain ATCC MYA-4681 / CBS 112371) (Trichophyton mentagrophytes) protein is Lipase A.